Consider the following 182-residue polypeptide: Large ribosomal subunit protein uL6 (182 aa).

Belongs to the universal ribosomal protein uL6 family. In terms of assembly, part of the 50S ribosomal subunit.

Its function is as follows. This protein binds to the 23S rRNA, and is important in its secondary structure. It is located near the subunit interface in the base of the L7/L12 stalk, and near the tRNA binding site of the peptidyltransferase center. This is Large ribosomal subunit protein uL6 from Methanococcus maripaludis (strain C7 / ATCC BAA-1331).